The sequence spans 168 residues: Outer-membrane lipoprotein YfiB (168 aa).

The signal sequence occupies residues 1–25; it reads MLPQRLHPSRLLALALFSLVLGLAG. A lipid anchor (N-palmitoyl cysteine) is attached at Cys26. The S-diacylglycerol cysteine moiety is linked to residue Cys26. Positions 53–168 constitute an OmpA-like domain; it reads EGWEFGMSSK…RRVAIIVPAE (116 aa).

Belongs to the outer membrane OOP (TC 1.B.6) superfamily. As to quaternary structure, homodimer. Interacts with YfiR. The YfiB-YfiR complex is a 2:2 heterotetramer.

It localises to the cell outer membrane. Its activity is regulated as follows. Both lipid anchor in the outer membrane and peptidoglycan binding are required for full activity. Once activated by certain cell stress, the dimeric YfiB transforms from a compact conformation to a stretched conformation, allowing the periplasmic domain of the membrane-anchored YfiB to penetrate the cell wall and sequester the YfiR dimer. GMP enhances the binding affinity between YfiB and YfiR. In terms of biological role, activates the diguanylate cyclase TpbB/YfiN by sequestering YfiR at the outer membrane, which counteracts the YfiR-mediated repression of TpbB/YfiN at the inner membrane and leads to increased c-di-GMP production. May act as a sensor of envelope stress. Its function is as follows. Part of the YfiB-TpbB-YfiR (or yfiBNR) system, encoding a tripartite signaling module that modulates intracellular c-di-GMP levels. The system is a key regulator of the small colony variant (SCV) phenotype, and plays an important role in biofilm formation and in vivo persistence. The c-di-GMP produced by TpbB/YfiN stimulates the production of the Pel and Psl exopolysaccharides, which promotes surface attachment, generates an SCV phenotype and confers resistance against phagocytosis. This Pseudomonas aeruginosa (strain ATCC 15692 / DSM 22644 / CIP 104116 / JCM 14847 / LMG 12228 / 1C / PRS 101 / PAO1) protein is Outer-membrane lipoprotein YfiB.